Reading from the N-terminus, the 62-residue chain is Bowman-Birk type proteinase inhibitor B7 (62 aa).

Disulfide bonds link Cys5–Cys59, Cys6–Cys23, Cys13–Cys21, Cys30–Cys37, and Cys34–Cys51.

It belongs to the Bowman-Birk serine protease inhibitor family. Expressed in bulb (at protein level).

In terms of biological role, serine protease inhibitor. Inhibits trypsin (Ki = 65 nM) and weakly inhibits chymotrypsin (Ki = 295 nM). Does not inhibit bacterial subtilisin. This Hyacinthus orientalis (Common hyacinth) protein is Bowman-Birk type proteinase inhibitor B7.